Consider the following 243-residue polypeptide: 1-(5-phosphoribosyl)-5-[(5-phosphoribosylamino)methylideneamino] imidazole-4-carboxamide isomerase (243 aa).

The active-site Proton acceptor is aspartate 8. Aspartate 129 serves as the catalytic Proton donor.

It belongs to the HisA/HisF family.

The protein localises to the cytoplasm. The catalysed reaction is 1-(5-phospho-beta-D-ribosyl)-5-[(5-phospho-beta-D-ribosylamino)methylideneamino]imidazole-4-carboxamide = 5-[(5-phospho-1-deoxy-D-ribulos-1-ylimino)methylamino]-1-(5-phospho-beta-D-ribosyl)imidazole-4-carboxamide. The protein operates within amino-acid biosynthesis; L-histidine biosynthesis; L-histidine from 5-phospho-alpha-D-ribose 1-diphosphate: step 4/9. The polypeptide is 1-(5-phosphoribosyl)-5-[(5-phosphoribosylamino)methylideneamino] imidazole-4-carboxamide isomerase (Brucella abortus (strain 2308)).